Here is a 362-residue protein sequence, read N- to C-terminus: Glucuronokinase 1 (362 aa).

Pro-126 to Ala-136 contributes to the ATP binding site. The active-site Proton acceptor is the Asp-179.

It belongs to the GHMP kinase family. It depends on Mg(2+) as a cofactor. Requires Mn(2+) as cofactor. Co(2+) is required as a cofactor. Highly expressed in pollen. Detected in seedlings, inflorescences, seeds, leaves and roots.

The catalysed reaction is D-glucuronate + ATP = 1-phospho-alpha-D-glucuronate + ADP + H(+). Functionally, sugar-1-kinase with a strict substrate specificity for D-glucuronic acid and ATP. Involved in the biosynthesis of UDP-glucuronic acid (UDP-GlcA), providing nucleotide sugars for cell-wall polymers. May be also involved in a salvage pathway for glucuronic acid. In Arabidopsis thaliana (Mouse-ear cress), this protein is Glucuronokinase 1 (GLCAK1).